A 428-amino-acid chain; its full sequence is Trigger factor (428 aa).

The PPIase FKBP-type domain occupies 163–248 (GDTAIIDFEG…INDVKVKELS (86 aa)).

This sequence belongs to the FKBP-type PPIase family. Tig subfamily.

The protein resides in the cytoplasm. It carries out the reaction [protein]-peptidylproline (omega=180) = [protein]-peptidylproline (omega=0). In terms of biological role, involved in protein export. Acts as a chaperone by maintaining the newly synthesized protein in an open conformation. Functions as a peptidyl-prolyl cis-trans isomerase. This Clostridioides difficile (strain 630) (Peptoclostridium difficile) protein is Trigger factor.